A 246-amino-acid chain; its full sequence is Probable fimbrial chaperone YadV (246 aa).

The N-terminal stretch at 1 to 25 (MFFNTKHTTALCFVTCMAFSSSSIA) is a signal peptide.

Belongs to the periplasmic pilus chaperone family.

It localises to the periplasm. In terms of biological role, part of the yadCKLM-htrE-yadVN fimbrial operon. Could contribute to adhesion to various surfaces in specific environmental niches. The protein is Probable fimbrial chaperone YadV (yadV) of Escherichia coli (strain K12).